The primary structure comprises 319 residues: Protoheme IX farnesyltransferase (319 aa).

The next 8 helical transmembrane spans lie at 59 to 79 (IGLILATLVGGAFAAGSAGAF), 108 to 128 (EALVFSWLLGAAAIAILWFGA), 131 to 151 (LSAWLGLGAIFFYVVIYTIIL), 158 to 178 (NIVWGGAAGCFPVLIAWAAVT), 183 to 203 (WPAIILFMVIFLWTPPHYWPL), 232 to 252 (VVLYAWAMVACSLLMVPAGGA), 254 to 274 (WVYTVTAVLAGAWFLYESHAL), and 299 to 319 (LTLLFIALAVDPFVGPAVIGG).

It belongs to the UbiA prenyltransferase family. Protoheme IX farnesyltransferase subfamily.

The protein localises to the cell membrane. It carries out the reaction heme b + (2E,6E)-farnesyl diphosphate + H2O = Fe(II)-heme o + diphosphate. Its pathway is porphyrin-containing compound metabolism; heme O biosynthesis; heme O from protoheme: step 1/1. Converts heme B (protoheme IX) to heme O by substitution of the vinyl group on carbon 2 of heme B porphyrin ring with a hydroxyethyl farnesyl side group. The chain is Protoheme IX farnesyltransferase from Pseudarthrobacter chlorophenolicus (strain ATCC 700700 / DSM 12829 / CIP 107037 / JCM 12360 / KCTC 9906 / NCIMB 13794 / A6) (Arthrobacter chlorophenolicus).